The sequence spans 577 residues: Protein hinderin (577 aa).

Serine 21 is modified (phosphoserine). A coiled-coil region spans residues 91–167 (LKDLCLEDKR…CQELLSLYQK (77 aa)). Phosphoserine is present on serine 179. Residues 251–282 (TLHHPKDDLDKIPSETTTCNCESPGRKPAVPT) are disordered. Residues 254–263 (HPKDDLDKIP) are compositionally biased toward basic and acidic residues. The stretch at 358–402 (LKKQISEDRKQQLMLQKMELEIEKERLQHLLAQQETKLLLKQQQL) forms a coiled coil. Disordered stretches follow at residues 425 to 444 (SSSI…RKER), 449 to 492 (FHSH…GSLK), and 520 to 540 (LSPN…GAWN). The span at 449 to 468 (FHSHMKDDAQWSCQKKDTCR) shows a compositional bias: basic and acidic residues. Serine 490 and serine 521 each carry phosphoserine.

As to quaternary structure, interacts (via N- and C-terminal domains) with SMC3 (via central hinge region). Widely expressed.

In terms of biological role, competes with SMC1 for binding to SMC3. May affect the availability of SMC3 to engage in the formation of multimeric protein complexes. The polypeptide is Protein hinderin (KIAA1328) (Homo sapiens (Human)).